The sequence spans 291 residues: Meteorin (291 aa).

A signal peptide spans 1 to 21 (MLVATLLCALCCGLLAASAHA). 5 cysteine pairs are disulfide-bonded: Cys-28/Cys-49, Cys-80/Cys-116, Cys-169/Cys-240, Cys-172/Cys-264, and Cys-182/Cys-286.

Belongs to the meteorin family. Monomer. As to expression, highly expressed in brain. Expressed in undifferentiated neural progenitors and in astrocyte lineage, particularly in Bergmann glia, a subtype of radial glia, and a few discrete neuronal populations residing in the superior colliculus, the ocular motor nucleus, the raphe and pontine nuclei, and in various thalamic nuclei. Weakly expressed in heart, kidney, skeletal muscle, spleen, testis, gut and lung.

It is found in the secreted. In terms of biological role, involved in both glial cell differentiation and axonal network formation during neurogenesis. Promotes astrocyte differentiation and transforms cerebellar astrocytes into radial glia. Also induces axonal extension in small and intermediate neurons of sensory ganglia by activating nearby satellite glia. This chain is Meteorin (Metrn), found in Mus musculus (Mouse).